A 158-amino-acid polypeptide reads, in one-letter code: Cytochrome c-type biogenesis protein CcmE (158 aa).

Residues 1–23 (MNSQSFKNFPSLKFISKKRRKER) are Cytoplasmic-facing. Residues 24–44 (LLMVLLCLFIMAITTGLIVYA) form a helical; Signal-anchor for type II membrane protein membrane-spanning segment. Residues 45-158 (MRNTANFFRT…DRLKKHHDIK (114 aa)) are Periplasmic-facing. Heme contacts are provided by histidine 138 and tyrosine 142.

Belongs to the CcmE/CycJ family.

Its subcellular location is the cell inner membrane. Its function is as follows. Heme chaperone required for the biogenesis of c-type cytochromes. Transiently binds heme delivered by CcmC and transfers the heme to apo-cytochromes in a process facilitated by CcmF and CcmH. In Bartonella bacilliformis (strain ATCC 35685 / KC583 / Herrer 020/F12,63), this protein is Cytochrome c-type biogenesis protein CcmE.